The chain runs to 436 residues: Glutamate-1-semialdehyde 2,1-aminomutase (436 aa).

K269 is subject to N6-(pyridoxal phosphate)lysine.

It belongs to the class-III pyridoxal-phosphate-dependent aminotransferase family. HemL subfamily. In terms of assembly, homodimer. The cofactor is pyridoxal 5'-phosphate.

It is found in the cytoplasm. The enzyme catalyses (S)-4-amino-5-oxopentanoate = 5-aminolevulinate. It participates in porphyrin-containing compound metabolism; protoporphyrin-IX biosynthesis; 5-aminolevulinate from L-glutamyl-tRNA(Glu): step 2/2. Its pathway is porphyrin-containing compound metabolism; chlorophyll biosynthesis. The polypeptide is Glutamate-1-semialdehyde 2,1-aminomutase (Heliobacterium modesticaldum (strain ATCC 51547 / Ice1)).